A 223-amino-acid chain; its full sequence is Putative oxidoreductase MT1904 (223 aa).

4–28 serves as a coordination point for NADP(+); sequence LVTGGDTDLGRTMAEGFRNDGHKVT. S128 is a substrate binding site.

Belongs to the short-chain dehydrogenases/reductases (SDR) family.

The polypeptide is Putative oxidoreductase MT1904 (Mycobacterium tuberculosis (strain CDC 1551 / Oshkosh)).